The primary structure comprises 850 residues: Probable beta-glucosidase J (850 aa).

N-linked (GlcNAc...) asparagine glycans are attached at residues asparagine 43 and asparagine 52. Residue aspartate 254 is part of the active site. Residues 423 to 583 enclose the PA14 domain; the sequence is TGERGYTFRV…DAETAIKQAV (161 aa). N-linked (GlcNAc...) asparagine glycosylation is present at asparagine 508.

This sequence belongs to the glycosyl hydrolase 3 family.

The protein resides in the secreted. It catalyses the reaction Hydrolysis of terminal, non-reducing beta-D-glucosyl residues with release of beta-D-glucose.. It participates in glycan metabolism; cellulose degradation. Functionally, beta-glucosidases are one of a number of cellulolytic enzymes involved in the degradation of cellulosic biomass. Catalyzes the last step releasing glucose from the inhibitory cellobiose. The protein is Probable beta-glucosidase J (bglJ) of Emericella nidulans (strain FGSC A4 / ATCC 38163 / CBS 112.46 / NRRL 194 / M139) (Aspergillus nidulans).